The chain runs to 368 residues: 3-dehydroquinate synthase (368 aa).

NAD(+) contacts are provided by residues 112-116 (GVIGD), 136-137 (TT), Lys149, Lys158, and 176-179 (TLIT). Zn(2+) is bound by residues Glu191, His256, and His273.

Belongs to the sugar phosphate cyclases superfamily. Dehydroquinate synthase family. It depends on Co(2+) as a cofactor. The cofactor is Zn(2+). NAD(+) serves as cofactor.

The protein localises to the cytoplasm. The enzyme catalyses 7-phospho-2-dehydro-3-deoxy-D-arabino-heptonate = 3-dehydroquinate + phosphate. It functions in the pathway metabolic intermediate biosynthesis; chorismate biosynthesis; chorismate from D-erythrose 4-phosphate and phosphoenolpyruvate: step 2/7. Functionally, catalyzes the conversion of 3-deoxy-D-arabino-heptulosonate 7-phosphate (DAHP) to dehydroquinate (DHQ). The protein is 3-dehydroquinate synthase of Prochlorococcus marinus (strain NATL2A).